The primary structure comprises 408 residues: LL-diaminopimelate aminotransferase (408 aa).

Y15 and G42 together coordinate substrate. Pyridoxal 5'-phosphate contacts are provided by residues Y72, 108–109 (SK), Y132, N187, Y218, and 246–248 (SFS). Residues K109, Y132, and N187 each coordinate substrate. An N6-(pyridoxal phosphate)lysine modification is found at K249. Pyridoxal 5'-phosphate-binding residues include R257 and N292. Positions 292 and 388 each coordinate substrate.

This sequence belongs to the class-I pyridoxal-phosphate-dependent aminotransferase family. LL-diaminopimelate aminotransferase subfamily. Homodimer. Pyridoxal 5'-phosphate is required as a cofactor.

It carries out the reaction (2S,6S)-2,6-diaminopimelate + 2-oxoglutarate = (S)-2,3,4,5-tetrahydrodipicolinate + L-glutamate + H2O + H(+). It functions in the pathway amino-acid biosynthesis; L-lysine biosynthesis via DAP pathway; LL-2,6-diaminopimelate from (S)-tetrahydrodipicolinate (aminotransferase route): step 1/1. Its function is as follows. Involved in the synthesis of meso-diaminopimelate (m-DAP or DL-DAP), required for both lysine and peptidoglycan biosynthesis. Catalyzes the direct conversion of tetrahydrodipicolinate to LL-diaminopimelate. This is LL-diaminopimelate aminotransferase from Leptospira borgpetersenii serovar Hardjo-bovis (strain L550).